We begin with the raw amino-acid sequence, 143 residues long: Large ribosomal subunit protein uL11 (143 aa).

Belongs to the universal ribosomal protein uL11 family. In terms of assembly, part of the ribosomal stalk of the 50S ribosomal subunit. Interacts with L10 and the large rRNA to form the base of the stalk. L10 forms an elongated spine to which L12 dimers bind in a sequential fashion forming a multimeric L10(L12)X complex. One or more lysine residues are methylated.

In terms of biological role, forms part of the ribosomal stalk which helps the ribosome interact with GTP-bound translation factors. In Bifidobacterium adolescentis (strain ATCC 15703 / DSM 20083 / NCTC 11814 / E194a), this protein is Large ribosomal subunit protein uL11.